The following is a 370-amino-acid chain: Chorismate synthase (370 aa).

The tract at residues 41–60 (IQGDLDRRKPGTSRHVTQRK) is disordered. 2 residues coordinate NADP(+): R48 and R54. FMN is bound by residues 125–127 (RSS), 238–239 (NA), G278, 293–297 (KPTSS), and R319.

It belongs to the chorismate synthase family. In terms of assembly, homotetramer. Requires FMNH2 as cofactor.

The catalysed reaction is 5-O-(1-carboxyvinyl)-3-phosphoshikimate = chorismate + phosphate. Its pathway is metabolic intermediate biosynthesis; chorismate biosynthesis; chorismate from D-erythrose 4-phosphate and phosphoenolpyruvate: step 7/7. Its function is as follows. Catalyzes the anti-1,4-elimination of the C-3 phosphate and the C-6 proR hydrogen from 5-enolpyruvylshikimate-3-phosphate (EPSP) to yield chorismate, which is the branch point compound that serves as the starting substrate for the three terminal pathways of aromatic amino acid biosynthesis. This reaction introduces a second double bond into the aromatic ring system. The polypeptide is Chorismate synthase (Cupriavidus pinatubonensis (strain JMP 134 / LMG 1197) (Cupriavidus necator (strain JMP 134))).